The following is a 30-amino-acid chain: Cycloviolacin-O4 (30 aa).

A cross-link (cyclopeptide (Gly-Asn)) is located at residues 1 to 30; that stretch reads GIPCGESCVWIPCISSAIGCSCKNKVCYRN. Intrachain disulfides connect C4/C20, C8/C22, and C13/C27.

This is a cyclic peptide. In terms of tissue distribution, expressed in petals, petioles, roots and runners but not in leaves (at protein level).

In terms of biological role, probably participates in a plant defense mechanism. This is Cycloviolacin-O4 from Viola odorata (Sweet violet).